The sequence spans 23 residues: Coenzyme PQQ synthesis protein A (23 aa).

The segment at residues 15–19 (EVTLY) is a cross-link (pyrroloquinoline quinone (Glu-Tyr)).

It belongs to the PqqA family.

It functions in the pathway cofactor biosynthesis; pyrroloquinoline quinone biosynthesis. Its function is as follows. Required for coenzyme pyrroloquinoline quinone (PQQ) biosynthesis. PQQ is probably formed by cross-linking a specific glutamate to a specific tyrosine residue and excising these residues from the peptide. This is Coenzyme PQQ synthesis protein A from Pseudomonas aeruginosa (strain UCBPP-PA14).